A 313-amino-acid polypeptide reads, in one-letter code: Transcription initiation factor IIB 2 (313 aa).

The segment at Ala-13–Glu-44 adopts a TFIIB-type zinc-finger fold. Residues Cys-17, Cys-20, Cys-36, and Cys-39 each contribute to the Zn(2+) site. Tandem repeats lie at residues Gln-130–Leu-213 and Ser-224–Lys-305.

Belongs to the TFIIB family.

Stabilizes TBP binding to an archaeal box-A promoter. Also responsible for recruiting RNA polymerase II to the pre-initiation complex (DNA-TBP-TFIIB). The sequence is that of Transcription initiation factor IIB 2 from Thermoplasma volcanium (strain ATCC 51530 / DSM 4299 / JCM 9571 / NBRC 15438 / GSS1).